The chain runs to 303 residues: Fe-S cluster assembly protein DRE2 (303 aa).

Residues 1 to 125 (MTHSRTALVL…WQKRAVTASA (125 aa)) are N-terminal SAM-like domain. The interval 126–188 (PVKLAPRQPV…GDAPIAENDL (63 aa)) is linker. Positions 202, 213, 216, and 218 each coordinate [2Fe-2S] cluster. The tract at residues 202–218 (CGRTQTRRRKACKDCTC) is fe-S binding site A. Positions 266, 269, 277, and 280 each coordinate [4Fe-4S] cluster. 2 short sequence motifs (cx2C motif) span residues 266-269 (CGSC) and 277-280 (CSGC). Residues 266–280 (CGSCSLGDAFRCSGC) form a fe-S binding site B region.

It belongs to the anamorsin family. As to quaternary structure, monomer. Interacts with TAH18. Interacts with MIA40. [2Fe-2S] cluster serves as cofactor. It depends on [4Fe-4S] cluster as a cofactor.

It is found in the cytoplasm. The protein localises to the mitochondrion intermembrane space. Its function is as follows. Component of the cytosolic iron-sulfur (Fe-S) protein assembly (CIA) machinery required for the maturation of extramitochondrial Fe-S proteins. Part of an electron transfer chain functioning in an early step of cytosolic Fe-S biogenesis, facilitating the de novo assembly of a [4Fe-4S] cluster on the scaffold complex CFD1-NBP35. Electrons are transferred to DRE2 from NADPH via the FAD- and FMN-containing protein TAH18. TAH18-DRE2 are also required for the assembly of the diferric tyrosyl radical cofactor of ribonucleotide reductase (RNR), probably by providing electrons for reduction during radical cofactor maturation in the catalytic small subunit RNR2. The chain is Fe-S cluster assembly protein DRE2 from Eremothecium gossypii (strain ATCC 10895 / CBS 109.51 / FGSC 9923 / NRRL Y-1056) (Yeast).